The following is a 197-amino-acid chain: MSSASAPGPAPACLTLWDEEDFQGRRCRLLSDCANVGERGGLRRVRSVKVENGAWVAFEYPDFQGQQFILEKGDYPRWSAWSGSSGHHSNQLLSFRPVLCANHSDSRVTLFEGENFQGCKFELSDDYPSLPSMGWASKEVGSLKVSSGAWVAYQYPGYRGYQYVLERDRHSGEFRNYSEFGTQAHTGQLQSIRRVQH.

An N-terminal arm region spans residues 1-11 (MSSASAPGPAP). Beta/gamma crystallin 'Greek key' domains follow at residues 12-52 (ACLT…KVEN) and 53-99 (GAWV…RPVL). The tract at residues 100 to 105 (CANHSD) is connecting peptide. 2 Beta/gamma crystallin 'Greek key' domains span residues 106–147 (SRVT…KVSS) and 148–196 (GAWV…RRVQ).

The protein belongs to the beta/gamma-crystallin family. In terms of assembly, homo/heterodimer, or complexes of higher-order. The structure of beta-crystallin oligomers seems to be stabilized through interactions between the N-terminal arms.

Crystallins are the dominant structural components of the vertebrate eye lens. This is Beta-crystallin A2 (CRYBA2) from Oryctolagus cuniculus (Rabbit).